A 160-amino-acid chain; its full sequence is Deoxyuridine 5'-triphosphate nucleotidohydrolase (160 aa).

Substrate is bound by residues 72 to 74 (RSG), N85, and 89 to 91 (TID).

This sequence belongs to the dUTPase family. It depends on Mg(2+) as a cofactor.

The catalysed reaction is dUTP + H2O = dUMP + diphosphate + H(+). The protein operates within pyrimidine metabolism; dUMP biosynthesis; dUMP from dCTP (dUTP route): step 2/2. In terms of biological role, this enzyme is involved in nucleotide metabolism: it produces dUMP, the immediate precursor of thymidine nucleotides and it decreases the intracellular concentration of dUTP so that uracil cannot be incorporated into DNA. This chain is Deoxyuridine 5'-triphosphate nucleotidohydrolase, found in Methylocella silvestris (strain DSM 15510 / CIP 108128 / LMG 27833 / NCIMB 13906 / BL2).